A 486-amino-acid polypeptide reads, in one-letter code: ATP synthase subunit beta (486 aa).

Residue 164 to 171 participates in ATP binding; it reads GGAGVGKT.

The protein belongs to the ATPase alpha/beta chains family. As to quaternary structure, F-type ATPases have 2 components, CF(1) - the catalytic core - and CF(0) - the membrane proton channel. CF(1) has five subunits: alpha(3), beta(3), gamma(1), delta(1), epsilon(1). CF(0) has four main subunits: a(1), b(1), b'(1) and c(9-12).

The protein localises to the cellular thylakoid membrane. It catalyses the reaction ATP + H2O + 4 H(+)(in) = ADP + phosphate + 5 H(+)(out). Functionally, produces ATP from ADP in the presence of a proton gradient across the membrane. The catalytic sites are hosted primarily by the beta subunits. The sequence is that of ATP synthase subunit beta from Prochlorococcus marinus subsp. pastoris (strain CCMP1986 / NIES-2087 / MED4).